The following is a 58-amino-acid chain: Large ribosomal subunit protein bL32 (58 aa).

Basic residues predominate over residues 1 to 20 (MALPKHKKSKSKRDKRRTHQ). A disordered region spans residues 1-26 (MALPKHKKSKSKRDKRRTHQKLTAPN).

The protein belongs to the bacterial ribosomal protein bL32 family.

The chain is Large ribosomal subunit protein bL32 from Desulfatibacillum aliphaticivorans.